A 147-amino-acid polypeptide reads, in one-letter code: Large ribosomal subunit protein bL9 (147 aa).

Belongs to the bacterial ribosomal protein bL9 family.

Its function is as follows. Binds to the 23S rRNA. The chain is Large ribosomal subunit protein bL9 from Myxococcus xanthus (strain DK1622).